The following is a 105-amino-acid chain: N(4)-acetylcytidine amidohydrolase (105 aa).

The ASCH domain occupies 8-93 (TFFEFLTPLV…ALIQEIYPNI (86 aa)). The Proton acceptor role is filled by K22. T25 acts as the Nucleophile in catalysis. The active-site Proton donor is E75.

Belongs to the N(4)-acetylcytidine amidohydrolase family.

It carries out the reaction N(4)-acetylcytidine + H2O = cytidine + acetate + H(+). It catalyses the reaction N(4)-acetyl-2'-deoxycytidine + H2O = 2'-deoxycytidine + acetate + H(+). The catalysed reaction is N(4)-acetylcytosine + H2O = cytosine + acetate + H(+). In terms of biological role, catalyzes the hydrolysis of N(4)-acetylcytidine (ac4C). This chain is N(4)-acetylcytidine amidohydrolase, found in Vibrio cholerae serotype O1 (strain ATCC 39315 / El Tor Inaba N16961).